Consider the following 125-residue polypeptide: Small ribosomal subunit protein uS12 (125 aa).

Positions 1 to 28 (MPTINQLVRKGREKVKKKSKAPALEGNP) are disordered. The span at 9-20 (RKGREKVKKKSK) shows a compositional bias: basic residues. Asp-89 is modified (3-methylthioaspartic acid). Positions 104–125 (AAGVKDRKQSRSKYGTKRPKEK) are disordered. Residues 113-125 (SRSKYGTKRPKEK) are compositionally biased toward basic residues.

Belongs to the universal ribosomal protein uS12 family. In terms of assembly, part of the 30S ribosomal subunit. Contacts proteins S8 and S17. May interact with IF1 in the 30S initiation complex.

Its function is as follows. With S4 and S5 plays an important role in translational accuracy. Functionally, interacts with and stabilizes bases of the 16S rRNA that are involved in tRNA selection in the A site and with the mRNA backbone. Located at the interface of the 30S and 50S subunits, it traverses the body of the 30S subunit contacting proteins on the other side and probably holding the rRNA structure together. The combined cluster of proteins S8, S12 and S17 appears to hold together the shoulder and platform of the 30S subunit. The polypeptide is Small ribosomal subunit protein uS12 (Persephonella marina (strain DSM 14350 / EX-H1)).